The primary structure comprises 314 residues: Dihydroorotate dehydrogenase (fumarate) (314 aa).

Substrate contacts are provided by residues K46, 70-74, and N130; that span reads NSMGL. Position 46 to 47 (46 to 47) interacts with FMN; sequence KS. N130 contacts FMN. Active-site nucleophile residues include S132 and C133. Residues K167 and I195 each contribute to the FMN site. Residue 196-197 participates in substrate binding; it reads NS. FMN contacts are provided by residues G224, 252-253, and 274-275; these read GG and GT.

This sequence belongs to the dihydroorotate dehydrogenase family. Type 1 subfamily. In terms of assembly, homodimer. FMN is required as a cofactor.

Its subcellular location is the cytoplasm. It catalyses the reaction (S)-dihydroorotate + fumarate = orotate + succinate. Its pathway is pyrimidine metabolism; UMP biosynthesis via de novo pathway. Its function is as follows. Catalyzes the conversion of dihydroorotate to orotate with fumarate as the electron acceptor. The protein is Dihydroorotate dehydrogenase (fumarate) (URA1) of Saccharomyces paradoxus (Yeast).